A 457-amino-acid chain; its full sequence is G-protein coupled receptor 135 (457 aa).

Positions 1–26 are disordered; that stretch reads MEEQARPPGRPAASATLQGSAHPGGA. Over 1–64 the chain is Extracellular; the sequence is MEEQARPPGR…EAAGSRGPAP (64 aa). Asparagine 47 carries N-linked (GlcNAc...) asparagine glycosylation. A helical membrane pass occupies residues 65-85; that stretch reads LLWHGAAVAAQALVLLLIFLL. Residues 86–109 are Cytoplasmic-facing; it reads SSLGNCAVMGVIVKHRQLRTVTNA. Residues 110–130 form a helical membrane-spanning segment; sequence FILSLSLSDLLTALLCLPAAF. The Extracellular segment spans residues 131–156; the sequence is LDLFAPPGDSGPWRSFCAASRFFSSC. Residues 157–177 form a helical membrane-spanning segment; that stretch reads FGIVSTFSVALISLDRYCAIV. At 178 to 189 the chain is on the cytoplasmic side; that stretch reads RPPRDKLGRRRA. A helical transmembrane segment spans residues 190–210; sequence LQLLAGAWLAALGFSLPWDLL. The Extracellular segment spans residues 211–235; the sequence is RAPREPPAPQSFHRCLYRTSPDPAQ. Residues 236–256 traverse the membrane as a helical segment; that stretch reads LGVAYSVGLVVACYLLPFLLM. Topologically, residues 257 to 295 are cytoplasmic; the sequence is CFCRYHICKTVRLSDVRVRPMTTYARVLRFFSEVRTATT. The helical transmembrane segment at 296-316 threads the bilayer; it reads VLIMIIFVMCCWGPYCFLVLL. Topologically, residues 317-329 are extracellular; that stretch reads AATRQGQATQAPS. Residues 330 to 350 form a helical membrane-spanning segment; the sequence is LLNVAAVWLTWANGAINPVIY. Residues 351 to 457 lie on the Cytoplasmic side of the membrane; it reads AIRNPNISML…HNSETRDSSI (107 aa).

It belongs to the G-protein coupled receptor 1 family. In terms of assembly, interacts with MTNR1B. Interacts with ARRB1 and ARRB2 in a spontaneous and agonist-independent manner; leading to the internalization of GPR135 in the endosomal compartment.

The protein localises to the cell membrane. It is found in the endosome membrane. Its function is as follows. Orphan receptor. Has spontaneous activity for beta-arrestin recruitment. Shows a reciprocal regulatory interaction with the melatonin receptor MTNR1B most likely through receptor heteromerization. The sequence is that of G-protein coupled receptor 135 (Gpr135) from Mus musculus (Mouse).